A 281-amino-acid polypeptide reads, in one-letter code: Feruloyl esterase A (281 aa).

The first 21 residues, 1–21 (MKQFSAKYALILLATAGQALA), serve as a signal peptide directing secretion. 3 disulfide bridges follow: cysteine 50–cysteine 279, cysteine 112–cysteine 115, and cysteine 248–cysteine 255. Aspartate 98 provides a ligand contact to substrate. The N-linked (GlcNAc...) asparagine glycan is linked to asparagine 100. Substrate is bound at residue tyrosine 101. Serine 154 serves as the catalytic Nucleophile. Aspartate 215 (charge relay system) is an active-site residue. Histidine 268 serves as a coordination point for substrate. The Charge relay system role is filled by histidine 268.

Glycosylated.

It localises to the secreted. The catalysed reaction is feruloyl-polysaccharide + H2O = ferulate + polysaccharide.. Its activity is regulated as follows. Inhibited by the specific serine esterase inhibitor diisopropylfluorophosphate. In terms of biological role, involved in degradation of plant cell walls. Hydrolyzes the feruloyl-arabinose ester bond in arabinoxylans, and the feruloyl-galactose ester bond in pectin. Binds to cellulose. The polypeptide is Feruloyl esterase A (faeA) (Aspergillus niger).